Reading from the N-terminus, the 634-residue chain is Chaperone protein HtpG (634 aa).

Residues Met-1–Arg-342 form an a; substrate-binding region. Positions Glu-343–Gln-559 are b. The segment at Leu-560–Val-634 is c.

It belongs to the heat shock protein 90 family. Homodimer.

It is found in the cytoplasm. Molecular chaperone. Has ATPase activity. This is Chaperone protein HtpG from Xanthomonas oryzae pv. oryzae (strain MAFF 311018).